Reading from the N-terminus, the 790-residue chain is von Willebrand factor A domain-containing protein 2 (790 aa).

Residues 1–22 (MRLPWVNGILAFLSSQVLQCLC) form the signal peptide. Residues 50–221 (DILILLDGSN…DAVNGLATSL (172 aa)) form the VWFA 1 domain. The EGF-like 1 domain occupies 295–332 (PDPCDSQPCKNGGTCIAEGQDKYHCVCPAGFGGDTECA). Intrachain disulfides connect Cys298–Cys309, Cys303–Cys319, and Cys321–Cys331. VWFA domains are found at residues 342–518 (DLLF…QKRI) and 532–702 (DLAF…EDSV). Residues 713–748 (PVNLCKPNPCMNDGVCILRQGSYRCDCRGWDGPHCE) form the EGF-like 2 domain. Cystine bridges form between Cys717–Cys728, Cys722–Cys737, and Cys739–Cys747. Residues 758–790 (WPQGLHSRSRQQRHSRKRRLKSVSGSRSSRKKP) are disordered. Over residues 764 to 778 (SRSRQQRHSRKRRLK) the composition is skewed to basic residues.

In terms of assembly, forms monomers and multimers.

It localises to the secreted. This Xenopus laevis (African clawed frog) protein is von Willebrand factor A domain-containing protein 2 (vwa2).